Reading from the N-terminus, the 120-residue chain is Peptidyl-tRNA hydrolase (120 aa).

Belongs to the PTH2 family. As to quaternary structure, homodimer.

The protein localises to the cytoplasm. The enzyme catalyses an N-acyl-L-alpha-aminoacyl-tRNA + H2O = an N-acyl-L-amino acid + a tRNA + H(+). In terms of biological role, the natural substrate for this enzyme may be peptidyl-tRNAs which drop off the ribosome during protein synthesis. This chain is Peptidyl-tRNA hydrolase, found in Saccharolobus solfataricus (strain ATCC 35092 / DSM 1617 / JCM 11322 / P2) (Sulfolobus solfataricus).